The primary structure comprises 347 residues: NADH-ubiquinone oxidoreductase chain 2 (347 aa).

The next 11 helical transmembrane spans lie at 3–23 (PPIL…VMTS), 25–45 (HWML…PILM), 59–79 (YFLT…INLL), 96–116 (ILMT…FWVP), 122–142 (ISLS…LSVL), 149–169 (INPN…GWGG), 178–198 (IMAY…LYNP), 201–221 (MFLN…LFMI), 237–257 (APLI…LPPL), 274–294 (EMII…YFYM), and 323–343 (MIFL…TPMI).

The protein belongs to the complex I subunit 2 family. In terms of assembly, core subunit of respiratory chain NADH dehydrogenase (Complex I) which is composed of 45 different subunits. Interacts with TMEM242.

The protein localises to the mitochondrion inner membrane. The enzyme catalyses a ubiquinone + NADH + 5 H(+)(in) = a ubiquinol + NAD(+) + 4 H(+)(out). Functionally, core subunit of the mitochondrial membrane respiratory chain NADH dehydrogenase (Complex I) which catalyzes electron transfer from NADH through the respiratory chain, using ubiquinone as an electron acceptor. Essential for the catalytic activity and assembly of complex I. In Civettictis civetta (African civet), this protein is NADH-ubiquinone oxidoreductase chain 2.